A 301-amino-acid polypeptide reads, in one-letter code: NAD kinase (301 aa).

The active-site Proton acceptor is Asp-81. NAD(+) contacts are provided by residues 81–82, 155–156, His-166, Arg-183, Asp-185, 196–201, and Gln-256; these read DG, NE, and TAYSLS.

This sequence belongs to the NAD kinase family. A divalent metal cation serves as cofactor.

It is found in the cytoplasm. The enzyme catalyses NAD(+) + ATP = ADP + NADP(+) + H(+). Functionally, involved in the regulation of the intracellular balance of NAD and NADP, and is a key enzyme in the biosynthesis of NADP. Catalyzes specifically the phosphorylation on 2'-hydroxyl of the adenosine moiety of NAD to yield NADP. This chain is NAD kinase, found in Mannheimia succiniciproducens (strain KCTC 0769BP / MBEL55E).